The primary structure comprises 815 residues: Probable receptor-like protein kinase At2g39360 (815 aa).

The first 26 residues, 1 to 26, serve as a signal peptide directing secretion; sequence MINLKLFLELKLCFLITLLCSSHISS. Residues 27–407 are Extracellular-facing; sequence VSDTFFINCG…SSSNKSSNTS (381 aa). Asn-40, Asn-45, Asn-125, Asn-146, Asn-209, Asn-244, Asn-277, Asn-331, Asn-355, Asn-401, and Asn-405 each carry an N-linked (GlcNAc...) asparagine glycan. The helical transmembrane segment at 408 to 428 threads the bilayer; that stretch reads VGLIAGLSAALCVALVFGVVV. The Cytoplasmic portion of the chain corresponds to 429–815; it reads SWWCIRKRRR…FAQMVREETR (387 aa). In terms of domain architecture, Protein kinase spans 487–761; it reads FDESLVIGVG…GDLLWNLEFM (275 aa). ATP is bound by residues 493-501 and Lys-515; that span reads IGVGGFGKV. Asp-612 serves as the catalytic Proton acceptor.

It belongs to the protein kinase superfamily. Ser/Thr protein kinase family.

It localises to the cell membrane. This chain is Probable receptor-like protein kinase At2g39360, found in Arabidopsis thaliana (Mouse-ear cress).